The chain runs to 521 residues: Cytochrome P450 52A9 (521 aa).

Heme is bound at residue cysteine 468.

This sequence belongs to the cytochrome P450 family. It depends on heme as a cofactor.

It is found in the membrane. Together with an NADPH cytochrome P450 the enzyme system catalyzes the terminal hydroxylation as the first step in the assimilation of alkanes and fatty acids. The chain is Cytochrome P450 52A9 (CYP52A9) from Candida maltosa (Yeast).